Reading from the N-terminus, the 536-residue chain is MATRAQPGPLSQAGSAGVAALATVGVASGPGPGRPGPLQDETLGVASVPSQWRAVQGIRWETKSCQTASIATASASAQARNHVDAQVQTEAPVPVSVQPPSQYDIPRLAAFLRRVEAMVIRELNKNWQSHAFDGFEVNWTEQQQMVSCLYTLGYPPAQAQGLHVTSISWNSTGSVVACAYGRLDHGDWSTLKSFVCAWNLDRRDLRPQQPSAVVEVPSAVLCLAFHPTQPSHVAGGLYSGEVLVWDLSRLEDPLLWRTGLTDDTHTDPVSQVVWLPEPGHSHRFQVLSVATDGKVLLWQGIGVGQLQLTEGFALVMQQLPRSTKLKKHPRGETEVGATAVAFSSFDPRLFILGTEGGFPLKCSLAAGEAALTRMPSSVPLRAPAQFTFSPHGGPIYSVSCSPFHRNLFLSAGTDGHVHLYSMLQAPPLTSLQLSLKYLFAVRWSPVRPLVFAAASGKGDVQLFDLQKSSQKPTVLIKQTQDESPVYCLEFNSQQTQLLAAGDAQGTVKVWQLSTEFTEQGPREAEDLDCLAAEVAA.

The residue at position 15 (Ser15) is a Phosphoserine. Residues 80 to 93 (RNHVDAQVQTEAPV) form a DYNLL2 binding region. The DYNLRB1 binding stretch occupies residues 106–131 (PRLAAFLRRVEAMVIRELNKNWQSHA). WD repeat units lie at residues 215-255 (EVPS…DPLL), 264-308 (THTD…QLQL), 390-430 (PHGG…PLTS), 433-473 (LSLK…QKPT), and 480-520 (QDES…TEQG).

This sequence belongs to the dynein light intermediate chain family. In terms of assembly, the cytoplasmic dynein 2 complex consists of two catalytic heavy chains (HCs) and a number of non-catalytic subunits presented by intermediate chains (ICs), light intermediate chains (LICs) and light chains (LCs). Among them, a heavy chain (DYNC2H1), two intermediate chains (DYNC2I2 and DYNC2I1), a light intermediate chain (DYNC2LI1), and a light chain (DYNLT2B) are unique to the cytoplasmic dynein complex 2, but a subset of the light chains are also shared by dynein-1 and dynein-2 complexes. Interacts with DYNC2I1; their C-terminal domains each bind a copy of the heavy chain, and their extended N-terminal regions are held together by an array of light chain dimers. Interacts with DYNLL2; this interaction is essential for dynein-2-mediated retrograde trafficking of ciliary proteins. Interacts with DYNLRB1; this interaction is essential for dynein-2-mediated retrograde trafficking of ciliary proteins. Interacts (via the WD domains) with MAP3K7 and TAB3. Interacts (via WD domains) with TAB2 (via C-terminus). Interacts (via WD domains) with TRAF6 (via TRAF-type domains). In terms of tissue distribution, expressed in several cell lines (at protein level).

The protein resides in the cytoplasm. Its subcellular location is the cytoskeleton. It localises to the cilium basal body. The protein localises to the cilium axoneme. It is found in the microtubule organizing center. The protein resides in the centrosome. Its subcellular location is the cell projection. It localises to the cilium. The protein localises to the filopodium. Its function is as follows. Acts as one of several non-catalytic accessory components of the cytoplasmic dynein 2 complex (dynein-2 complex), a motor protein complex that drives the movement of cargos along microtubules within cilia and flagella in concert with the intraflagellar transport (IFT) system. DYNC2I2 plays a major role in retrograde ciliary protein trafficking and in ciliogenesis. Required also to maintain a functional transition zone. In terms of biological role, acts as a negative regulator of the Toll-like and IL-1R receptor signaling pathways. Inhibits the MAP3K7-induced NF-kappa-B activation pathway. Inhibits MAP3K7 phosphorylation at 'Thr-184' and 'Thr-187' upon Il-1 beta stimulation. The protein is Cytoplasmic dynein 2 intermediate chain 2 of Homo sapiens (Human).